The following is a 528-amino-acid chain: Na(+)/H(+) antiporter NhaB (528 aa).

A run of 11 helical transmembrane segments spans residues 23–43, 45–65, 90–110, 136–156, 204–224, 242–262, 305–325, 350–370, 392–412, 450–470, and 479–499; these read VAII…DPFV, GWLL…CYPL, LVAN…IYFM, CFAA…AVVI, LLMH…VGEP, IRMA…CAIV, GLIA…VGLI, EEAL…AVII, LALF…VFVG, ATPN…APLI, and IMAL…IMFF.

This sequence belongs to the NhaB Na(+)/H(+) (TC 2.A.34) antiporter family.

It is found in the cell inner membrane. It catalyses the reaction 2 Na(+)(in) + 3 H(+)(out) = 2 Na(+)(out) + 3 H(+)(in). Na(+)/H(+) antiporter that extrudes sodium in exchange for external protons. The protein is Na(+)/H(+) antiporter NhaB of Vibrio campbellii (strain ATCC BAA-1116).